Consider the following 1375-residue polypeptide: DNA-directed RNA polymerase subunit beta (1375 aa).

It belongs to the RNA polymerase beta chain family. The RNAP catalytic core consists of 2 alpha, 1 beta, 1 beta' and 1 omega subunit. When a sigma factor is associated with the core the holoenzyme is formed, which can initiate transcription.

It carries out the reaction RNA(n) + a ribonucleoside 5'-triphosphate = RNA(n+1) + diphosphate. Functionally, DNA-dependent RNA polymerase catalyzes the transcription of DNA into RNA using the four ribonucleoside triphosphates as substrates. This chain is DNA-directed RNA polymerase subunit beta, found in Coxiella burnetii (strain CbuG_Q212) (Coxiella burnetii (strain Q212)).